The following is a 344-amino-acid chain: GTP 3',8-cyclase (344 aa).

A Radical SAM core domain is found at 19-244 (PFGRTISYLR…MDLAESTGGP (226 aa)). Arginine 28 provides a ligand contact to GTP. The [4Fe-4S] cluster site is built by cysteine 35 and cysteine 39. Position 41 (tyrosine 41) interacts with S-adenosyl-L-methionine. A [4Fe-4S] cluster-binding site is contributed by cysteine 42. Position 77 (arginine 77) interacts with GTP. An S-adenosyl-L-methionine-binding site is contributed by glycine 81. Threonine 111 lines the GTP pocket. Residue serine 135 coordinates S-adenosyl-L-methionine. A GTP-binding site is contributed by lysine 171. Methionine 205 provides a ligand contact to S-adenosyl-L-methionine. The [4Fe-4S] cluster site is built by cysteine 268 and cysteine 271. Position 273-275 (273-275 (RVR)) interacts with GTP. Cysteine 285 contributes to the [4Fe-4S] cluster binding site.

This sequence belongs to the radical SAM superfamily. MoaA family. Monomer and homodimer. [4Fe-4S] cluster serves as cofactor.

It catalyses the reaction GTP + AH2 + S-adenosyl-L-methionine = (8S)-3',8-cyclo-7,8-dihydroguanosine 5'-triphosphate + 5'-deoxyadenosine + L-methionine + A + H(+). It participates in cofactor biosynthesis; molybdopterin biosynthesis. In terms of biological role, catalyzes the cyclization of GTP to (8S)-3',8-cyclo-7,8-dihydroguanosine 5'-triphosphate. The sequence is that of GTP 3',8-cyclase from Bradyrhizobium diazoefficiens (strain JCM 10833 / BCRC 13528 / IAM 13628 / NBRC 14792 / USDA 110).